Consider the following 546-residue polypeptide: Thermolysin (546 aa).

Positions 1–25 are cleaved as a signal peptide; that stretch reads MDKRAMLGAIGLAFGLMAWPFGASA. Positions 26-228 are cleaved as a propeptide — activation peptide; the sequence is KEKSMVWNEQ…EAKPGGGQPV (203 aa). Ca(2+) is bound by residues aspartate 287, aspartate 289, glutamine 291, and aspartate 368. Residue histidine 372 coordinates Zn(2+). Residue glutamate 373 is part of the active site. Zn(2+)-binding residues include histidine 376 and glutamate 396. The Ca(2+) site is built by asparagine 413, aspartate 415, glutamate 417, glutamate 420, tyrosine 423, threonine 424, isoleucine 427, and aspartate 430. The active-site Proton donor is the histidine 461.

This sequence belongs to the peptidase M4 family. Ca(2+) serves as cofactor. Zn(2+) is required as a cofactor.

It is found in the secreted. The enzyme catalyses Preferential cleavage: Xaa-|-Leu &gt; Xaa-|-Phe.. Extracellular zinc metalloprotease. The chain is Thermolysin (npr) from Bacillus caldolyticus.